Here is a 597-residue protein sequence, read N- to C-terminus: Gigaxonin (597 aa).

The BTB domain occupies 30–99 (CDAHLVLDGE…IFSGQIRLNE (70 aa)). In terms of domain architecture, BACK spans 134–236 (CIGIRDFALH…DSSYLREQML (103 aa)). Kelch repeat units lie at residues 274–326 (CIVT…SAEG), 327–374 (FLFV…EIDG), 376–421 (LYIL…AMKK), 422–468 (KIYA…GVAM), 470–522 (LYVF…VYGA), and 528–574 (SIYV…AALR).

In terms of assembly, interacts with TBCB. Interacts with CUL3. Part of a complex that contains CUL3, RBX1 and GAN. Interacts (via BTB domain) with UBA1. Interacts (via Kelch domains) with MAP1B (via C-terminus) and MAP1S (via C-terminus). Ubiquitinated by E3 ubiquitin ligase complex formed by CUL3 and RBX1 and probably targeted for proteasome-independent degradation. Expressed in brain, heart and muscle (at protein level).

Its subcellular location is the cytoplasm. It localises to the cytoskeleton. Its pathway is protein modification; protein ubiquitination. Probable cytoskeletal component that directly or indirectly plays an important role in neurofilament architecture. May act as a substrate-specific adapter of an E3 ubiquitin-protein ligase complex which mediates the ubiquitination and subsequent proteasomal degradation of target proteins. Controls degradation of TBCB. Controls degradation of MAP1B and MAP1S, and is critical for neuronal maintenance and survival. The polypeptide is Gigaxonin (Mus musculus (Mouse)).